The following is an 875-amino-acid chain: Valine--tRNA ligase (875 aa).

The short motif at 44 to 54 (PNVTGKLHLGH) is the 'HIGH' region element. The 'KMSKS' region signature appears at 520 to 524 (KMSKS). Lysine 523 is a binding site for ATP. The stretch at 804–875 (LEGLINIEEE…VRARLAQLKQ (72 aa)) forms a coiled coil.

Belongs to the class-I aminoacyl-tRNA synthetase family. ValS type 1 subfamily. Monomer.

It localises to the cytoplasm. The enzyme catalyses tRNA(Val) + L-valine + ATP = L-valyl-tRNA(Val) + AMP + diphosphate. Its function is as follows. Catalyzes the attachment of valine to tRNA(Val). As ValRS can inadvertently accommodate and process structurally similar amino acids such as threonine, to avoid such errors, it has a 'posttransfer' editing activity that hydrolyzes mischarged Thr-tRNA(Val) in a tRNA-dependent manner. The chain is Valine--tRNA ligase from Anoxybacillus flavithermus (strain DSM 21510 / WK1).